A 422-amino-acid chain; its full sequence is Serine protease inhibitor A3A (422 aa).

The first 17 residues, 1 to 17 (MAFIAALGLLMVGICPA), serve as a signal peptide directing secretion. N-linked (GlcNAc...) asparagine glycans are attached at residues asparagine 218, asparagine 230, and asparagine 271. Positions 369-394 (HTEADVITIARYNFQSAKIKAKIVKV) are RCL.

The protein belongs to the serpin family.

It is found in the secreted. The protein is Serine protease inhibitor A3A (Serpina3a) of Mus musculus (Mouse).